Here is a 655-residue protein sequence, read N- to C-terminus: UvrABC system protein C (655 aa).

The GIY-YIG domain maps to 16 to 95 (TDPGVYRFRD…IKEFAPRYNL (80 aa)). One can recognise a UVR domain in the interval 207 to 242 (KRFIGTLEKQMAEAVAELDYERAARLRDDVIALRKV).

This sequence belongs to the UvrC family. As to quaternary structure, interacts with UvrB in an incision complex.

The protein localises to the cytoplasm. The UvrABC repair system catalyzes the recognition and processing of DNA lesions. UvrC both incises the 5' and 3' sides of the lesion. The N-terminal half is responsible for the 3' incision and the C-terminal half is responsible for the 5' incision. This is UvrABC system protein C from Renibacterium salmoninarum (strain ATCC 33209 / DSM 20767 / JCM 11484 / NBRC 15589 / NCIMB 2235).